Consider the following 211-residue polypeptide: Methylthioribulose-1-phosphate dehydratase (211 aa).

Residues H101 and H103 each contribute to the Zn(2+) site.

This sequence belongs to the aldolase class II family. MtnB subfamily. The cofactor is Zn(2+).

It catalyses the reaction 5-(methylsulfanyl)-D-ribulose 1-phosphate = 5-methylsulfanyl-2,3-dioxopentyl phosphate + H2O. Its pathway is amino-acid biosynthesis; L-methionine biosynthesis via salvage pathway; L-methionine from S-methyl-5-thio-alpha-D-ribose 1-phosphate: step 2/6. Catalyzes the dehydration of methylthioribulose-1-phosphate (MTRu-1-P) into 2,3-diketo-5-methylthiopentyl-1-phosphate (DK-MTP-1-P). This chain is Methylthioribulose-1-phosphate dehydratase, found in Alcanivorax borkumensis (strain ATCC 700651 / DSM 11573 / NCIMB 13689 / SK2).